The primary structure comprises 374 residues: Pectinesterase (374 aa).

The signal sequence occupies residues 1 to 31; the sequence is MVKLLNSTRELSINALSMLNSFGDMVAQATG. N-linked (GlcNAc...) asparagine glycosylation is found at N58 and N124. Positions 133 and 163 each coordinate substrate. D186 (proton donor) is an active-site residue. Cysteines 200 and 220 form a disulfide. D207 serves as the catalytic Nucleophile. N-linked (GlcNAc...) asparagine glycosylation occurs at N230. Residues R275 and W277 each contribute to the substrate site. N303 carries an N-linked (GlcNAc...) asparagine glycan.

This sequence belongs to the pectinesterase family. As to expression, pollen, and at much lower levels in pistils and petals.

It localises to the secreted. The protein localises to the cell wall. The catalysed reaction is [(1-&gt;4)-alpha-D-galacturonosyl methyl ester](n) + n H2O = [(1-&gt;4)-alpha-D-galacturonosyl](n) + n methanol + n H(+). The protein operates within glycan metabolism; pectin degradation; 2-dehydro-3-deoxy-D-gluconate from pectin: step 1/5. Its function is as follows. May play a role in pollen germination and/or tube growth. The polypeptide is Pectinesterase (PPE1) (Petunia integrifolia (Violet-flowered petunia)).